Reading from the N-terminus, the 409-residue chain is MLSSCGGHGHGNPRSLQEEHHGRCGEQQGGGGGGGQEQEQDGFLVREARASPPSPSSSSFLGSTSSSCSGGGGGGQMLSFSSPNGTAGLGLSSGGSMQGVLARVRGPFTPTQWMELEHQALIYKHIAANVSVPSSLLLPIRRSLHPWGWGSFPPGCADVEPRRCRRTDGKKWRCSRDAVGDQKYCERHINRGRHRSRKHVEGRKATLTIAEPSTVIAAGVSSRGHTVARQKQVKGSAATVSDPFSRQSNRKFLEKQNVVDQLSPMDSFDFSSTQSSPNYDNVALSPLKLHHDHDESYIGHGAGSSSEKGSMMYESRLTVSKETLDDGPLGEVFKRKNCQSASTEILTEKWTENPNLHCPSGILQMATKFNSISSGNTVNSGGTAVENLITDNGYLTARMMNPHIVPTLL.

Gly residues-rich tracts occupy residues methionine 1 to histidine 10 and glutamine 27 to glutamine 36. The disordered stretch occupies residues methionine 1–serine 81. Over residues serine 56 to cysteine 68 the composition is skewed to low complexity. A QLQ domain is found at proline 107–arginine 142. Residues aspartate 158–glycine 202 enclose the WRC domain. 2 consecutive short sequence motifs (bipartite nuclear localization signal) follow at residues arginine 163 to arginine 173 and arginine 191 to lysine 198. The tract at residues serine 221–aspartate 242 is disordered.

This sequence belongs to the GRF family.

It is found in the nucleus. Transcription activator that plays a regulatory role in gibberellin-induced stem elongation. The protein is Growth-regulating factor 8 (GRF8) of Oryza sativa subsp. japonica (Rice).